The sequence spans 52 residues: Conotoxin Ac4.3a (52 aa).

The propeptide occupies Ser-1–Arg-11. Gln-12 carries the pyrrolidone carboxylic acid modification. Glu-14 is subject to 4-carboxyglutamate. Residues Thr-18 and Thr-20 are each glycosylated (O-linked (HexNAc...) threonine). 3 positions are modified to 4-hydroxyproline: Pro-28, Pro-33, and Pro-47. Pro-47 is modified (proline amide). The propeptide occupies Gly-48 to Asp-52.

Belongs to the conotoxin A superfamily. Contains 3 disulfide bonds. In terms of tissue distribution, expressed by the venom duct.

It localises to the secreted. In terms of biological role, probable neurotoxin with ion channel inhibitor activity. This chain is Conotoxin Ac4.3a, found in Conus achatinus (Little frog cone).